Consider the following 466-residue polypeptide: MITLYNTLTRQKEVFKPIEPGKVKMYVCGPTVYNYIHIGNARPAINYDVVRRYFEYQGYNVEYVSNFTDVDDKLIKRSQELNQSVPEIAEKYIAAFHEDVGALNVRKATSNPRVMDHMDDIIQFIKDLVDQGYAYESGGDVYFRTRKFEGYGKLSHQSIDDLKVGARIDAGEHKEDALDFTLWKKAKPGEISWNSPFGEGRPGWHIECSVMAFHELGPTIDIHAGGSDLQFPHHENEIAQSEAHNHAPFANYWMHNGFINIDNEKMSKSLGNFILVHDIIKEVDPDVLRFFMISVHYRSPINYNLELVESARSGLERIRNSYQLIEERAQIATNIENQQTYIDQIDAILNRFETVMNDDFNTANAITAWYDLAKLANKYVLENTTSTEVIDKFKAVYQIFSDVLGVPLKSKNADELLDEDVEKLIEERNEARKNKDFARADEIRDMLKSQNIILEDTPQGVRFKRG.

Residue cysteine 28 participates in Zn(2+) binding. The short motif at 30 to 40 (PTVYNYIHIGN) is the 'HIGH' region element. Cysteine 208, histidine 233, and glutamate 237 together coordinate Zn(2+). A 'KMSKS' region motif is present at residues 265-269 (KMSKS). Lysine 268 lines the ATP pocket.

The protein belongs to the class-I aminoacyl-tRNA synthetase family. Monomer. It depends on Zn(2+) as a cofactor.

The protein resides in the cytoplasm. It catalyses the reaction tRNA(Cys) + L-cysteine + ATP = L-cysteinyl-tRNA(Cys) + AMP + diphosphate. The sequence is that of Cysteine--tRNA ligase from Staphylococcus aureus (strain Mu3 / ATCC 700698).